Reading from the N-terminus, the 180-residue chain is NAD(P)H-quinone oxidoreductase subunit 6, chloroplastic (180 aa).

5 helical membrane passes run 10–30 (ILLV…VLLT), 32–52 (IIYS…LYIL), 57–77 (FVAA…IVFA), 95–115 (VGDG…ITII), and 153–173 (FLPF…AITI).

It belongs to the complex I subunit 6 family. In terms of assembly, NDH is composed of at least 16 different subunits, 5 of which are encoded in the nucleus.

The protein localises to the plastid. It localises to the chloroplast thylakoid membrane. The catalysed reaction is a plastoquinone + NADH + (n+1) H(+)(in) = a plastoquinol + NAD(+) + n H(+)(out). It catalyses the reaction a plastoquinone + NADPH + (n+1) H(+)(in) = a plastoquinol + NADP(+) + n H(+)(out). Functionally, NDH shuttles electrons from NAD(P)H:plastoquinone, via FMN and iron-sulfur (Fe-S) centers, to quinones in the photosynthetic chain and possibly in a chloroplast respiratory chain. The immediate electron acceptor for the enzyme in this species is believed to be plastoquinone. Couples the redox reaction to proton translocation, and thus conserves the redox energy in a proton gradient. The protein is NAD(P)H-quinone oxidoreductase subunit 6, chloroplastic (ndhG) of Cycas taitungensis (Prince sago).